The chain runs to 209 residues: Uracil phosphoribosyltransferase (209 aa).

5-phospho-alpha-D-ribose 1-diphosphate is bound by residues Arg-79, Arg-104, and 131–139; that span reads DPMLATGGS. Uracil-binding positions include Ile-194 and 199–201; that span reads GDA. Asp-200 is a 5-phospho-alpha-D-ribose 1-diphosphate binding site.

Belongs to the UPRTase family. Requires Mg(2+) as cofactor.

It carries out the reaction UMP + diphosphate = 5-phospho-alpha-D-ribose 1-diphosphate + uracil. It functions in the pathway pyrimidine metabolism; UMP biosynthesis via salvage pathway; UMP from uracil: step 1/1. Its activity is regulated as follows. Allosterically activated by GTP. Its function is as follows. Catalyzes the conversion of uracil and 5-phospho-alpha-D-ribose 1-diphosphate (PRPP) to UMP and diphosphate. This chain is Uracil phosphoribosyltransferase, found in Desulfitobacterium hafniense (strain DSM 10664 / DCB-2).